The sequence spans 302 residues: Methionyl-tRNA formyltransferase (302 aa).

A (6S)-5,6,7,8-tetrahydrofolate-binding site is contributed by Ser108–Pro111. The segment covering Arg276 to Leu288 has biased composition (basic and acidic residues). The disordered stretch occupies residues Arg276–Ala302.

Belongs to the Fmt family.

The enzyme catalyses L-methionyl-tRNA(fMet) + (6R)-10-formyltetrahydrofolate = N-formyl-L-methionyl-tRNA(fMet) + (6S)-5,6,7,8-tetrahydrofolate + H(+). Its function is as follows. Attaches a formyl group to the free amino group of methionyl-tRNA(fMet). The formyl group appears to play a dual role in the initiator identity of N-formylmethionyl-tRNA by promoting its recognition by IF2 and preventing the misappropriation of this tRNA by the elongation apparatus. The polypeptide is Methionyl-tRNA formyltransferase (Cereibacter sphaeroides (strain ATCC 17029 / ATH 2.4.9) (Rhodobacter sphaeroides)).